The chain runs to 239 residues: Ribosomal RNA small subunit methyltransferase G (239 aa).

Residues glycine 95, leucine 100, 118 to 120 (EAT), 146 to 147 (AE), and arginine 164 each bind S-adenosyl-L-methionine.

This sequence belongs to the methyltransferase superfamily. RNA methyltransferase RsmG family.

Its subcellular location is the cytoplasm. The catalysed reaction is guanosine(527) in 16S rRNA + S-adenosyl-L-methionine = N(7)-methylguanosine(527) in 16S rRNA + S-adenosyl-L-homocysteine. Specifically methylates the N7 position of guanine in position 527 of 16S rRNA. In Sorangium cellulosum (strain So ce56) (Polyangium cellulosum (strain So ce56)), this protein is Ribosomal RNA small subunit methyltransferase G.